The following is a 349-amino-acid chain: Core protein VP7 (349 aa).

Residue Asn287 is glycosylated (N-linked (GlcNAc...) asparagine; by host).

Belongs to the orbivirus VP7 family. Homotrimer that assemble in a complex of 260 capsomers on an inner scaffold composed of VP3.

It is found in the virion. Its function is as follows. The VP7 protein is one of the five proteins (with VP1, VP3, VP4, and VP6) which form the inner capsid of the virus. The protein is Core protein VP7 (Segment-7) of Antilocapra americana (Pronghorn).